The chain runs to 255 residues: Adenosine 5'-phosphosulfate reductase (255 aa).

Positions 1–39 (MMTAEVRTPEQGGGPLTTEPRAPRSAPGHADASAPAFGP) are disordered. [4Fe-4S] cluster-binding residues include Cys-137, Cys-138, Cys-220, and Cys-223. The Nucleophile; cysteine thiosulfonate intermediate role is filled by Cys-246.

Belongs to the PAPS reductase family. CysH subfamily. [4Fe-4S] cluster is required as a cofactor.

It is found in the cytoplasm. It catalyses the reaction [thioredoxin]-disulfide + sulfite + AMP + 2 H(+) = adenosine 5'-phosphosulfate + [thioredoxin]-dithiol. It functions in the pathway sulfur metabolism; hydrogen sulfide biosynthesis; sulfite from sulfate. Its function is as follows. Catalyzes the formation of sulfite from adenosine 5'-phosphosulfate (APS) using thioredoxin as an electron donor. This chain is Adenosine 5'-phosphosulfate reductase, found in Deinococcus radiodurans (strain ATCC 13939 / DSM 20539 / JCM 16871 / CCUG 27074 / LMG 4051 / NBRC 15346 / NCIMB 9279 / VKM B-1422 / R1).